Consider the following 479-residue polypeptide: BRAP2 RING ZnF UBP domain-containing protein 2 (479 aa).

The RING-type; atypical zinc-finger motif lies at 167–207; that stretch reads CPVCLERLDQDTGGILTTMCNHSFHCSCISNWPDSSCPVCR. Residues 201–294 form a UBP-type; degenerate zinc finger; the sequence is SSCPVCRYCQ…GKLVELNSHG (94 aa). 8 residues coordinate Zn(2+): Cys-218, Cys-221, Cys-230, Cys-233, Cys-238, His-245, His-249, and His-255. Positions 328 to 442 form a coiled coil; that stretch reads NELLQAQLEN…MAQMDGESEV (115 aa). The disordered stretch occupies residues 434–479; sequence AQMDGESEVSETKEVQDATVSTTNTSSSGAGNVIHANKKKSNRRKG. Residues 451-466 show a composition bias toward low complexity; sequence ATVSTTNTSSSGAGNV. Residues 469–479 are compositionally biased toward basic residues; sequence ANKKKSNRRKG.

Component of the heteromeric E3 ligase complex made of BRIZ1 and BRIZ2. Forms heterooligomers with BRIZ1 via coiled-coil domains.

The enzyme catalyses S-ubiquitinyl-[E2 ubiquitin-conjugating enzyme]-L-cysteine + [acceptor protein]-L-lysine = [E2 ubiquitin-conjugating enzyme]-L-cysteine + N(6)-ubiquitinyl-[acceptor protein]-L-lysine.. Its pathway is protein modification; protein ubiquitination. RING-type ubiquitin E3 ligase that binds ubiquitin and is required for seed germination and post-germination growth. The polypeptide is BRAP2 RING ZnF UBP domain-containing protein 2 (Arabidopsis thaliana (Mouse-ear cress)).